Reading from the N-terminus, the 199-residue chain is 3-isopropylmalate dehydratase small subunit (199 aa).

The protein belongs to the LeuD family. LeuD type 1 subfamily. As to quaternary structure, heterodimer of LeuC and LeuD.

It carries out the reaction (2R,3S)-3-isopropylmalate = (2S)-2-isopropylmalate. It participates in amino-acid biosynthesis; L-leucine biosynthesis; L-leucine from 3-methyl-2-oxobutanoate: step 2/4. In terms of biological role, catalyzes the isomerization between 2-isopropylmalate and 3-isopropylmalate, via the formation of 2-isopropylmaleate. The protein is 3-isopropylmalate dehydratase small subunit of Aeromonas salmonicida (strain A449).